The following is a 472-amino-acid chain: Velvet complex subunit umv2 (472 aa).

Basic and acidic residues-rich tracts occupy residues 1–10 (MSRSDTDGRD), 29–59 (SQRR…DSHG), 67–80 (YSRD…HRGD), and 89–105 (SYQR…EQER). Disordered regions lie at residues 1 to 121 (MSRS…PLEA), 281 to 327 (CDDG…QFGG), and 433 to 472 (SQGI…EDDE). Over residues 106–116 (SYGGASASRSS) the composition is skewed to low complexity. Residues 158-441 (ENGRRYRLVV…ASQGIKIPVR (284 aa)) form the Velvet domain. Over residues 286-298 (RSSTHPQHASEST) the composition is skewed to polar residues. The segment covering 456 to 466 (DGMGDYDGASG) has biased composition (gly residues).

Belongs to the velvet family. VelB subfamily. In terms of assembly, component of the heterotrimeric velvet complex composed of laeA, veA and velB; VeA acting as a bridging protein between laeA and velB. Forms a heterodimeric complex with vosA; the formation of the velB-vosA complex is light-dependent.

It is found in the nucleus. Its subcellular location is the cytoplasm. Its function is as follows. Component of the velvet transcription factor complex that controls sexual/asexual developmental ratio in response to light, promoting sexual development in the darkness while stimulating asexual sporulation under illumination. The velvet complex acts as a global regulator for secondary metabolite gene expression. Component of the velB-VosA heterodimeric complex that plays a dual role in activating genes associated with spore maturation and repressing certain development-associated genes. The velB-VosA complex binds DNA through the DNA-binding domain of vosA that recognizes an 11-nucleotide consensus sequence 5'-CTGGCCGCGGC-3' consisting of two motifs in the promoters of key developmental regulatory genes. Required for full virulence on seedlings. The protein is Velvet complex subunit umv2 of Mycosarcoma maydis (Corn smut fungus).